Here is a 702-residue protein sequence, read N- to C-terminus: Dynein axonemal intermediate chain 1 (702 aa).

The segment at 1–58 (MLPASSKMPHKQPPPPRKQSISMGRGARKRDEDSGTEVGEGTDEWVQSKATVKPPDQL) is disordered. Ser134 and Ser137 each carry phosphoserine. WD repeat units lie at residues 383–423 (SSES…SQPS), 432–475 (KHTD…LVHT), 540–580 (AHNM…PMFI), 582–622 (DLNS…YEAI), and 630–669 (KKKN…RKMP).

This sequence belongs to the dynein intermediate chain family. In terms of assembly, consists of at least two heavy chains and a number of intermediate and light chains. Interacts with BICD2. Interacts with CFAP45 and CFAP52. Interacts with CFAP53.

The protein resides in the cytoplasm. The protein localises to the cytoskeleton. Its subcellular location is the cilium axoneme. In terms of biological role, part of the dynein complex of respiratory cilia. This chain is Dynein axonemal intermediate chain 1 (DNAI1), found in Bos taurus (Bovine).